The sequence spans 262 residues: Acyl-[acyl-carrier-protein]--UDP-N-acetylglucosamine O-acyltransferase (262 aa).

It belongs to the transferase hexapeptide repeat family. LpxA subfamily. As to quaternary structure, homotrimer.

Its subcellular location is the cytoplasm. The catalysed reaction is a (3R)-hydroxyacyl-[ACP] + UDP-N-acetyl-alpha-D-glucosamine = a UDP-3-O-[(3R)-3-hydroxyacyl]-N-acetyl-alpha-D-glucosamine + holo-[ACP]. Its pathway is glycolipid biosynthesis; lipid IV(A) biosynthesis; lipid IV(A) from (3R)-3-hydroxytetradecanoyl-[acyl-carrier-protein] and UDP-N-acetyl-alpha-D-glucosamine: step 1/6. Involved in the biosynthesis of lipid A, a phosphorylated glycolipid that anchors the lipopolysaccharide to the outer membrane of the cell. The sequence is that of Acyl-[acyl-carrier-protein]--UDP-N-acetylglucosamine O-acyltransferase from Vibrio atlanticus (strain LGP32) (Vibrio splendidus (strain Mel32)).